A 132-amino-acid polypeptide reads, in one-letter code: Small ribosomal subunit protein uS8 (132 aa).

The protein belongs to the universal ribosomal protein uS8 family. As to quaternary structure, part of the 30S ribosomal subunit. Contacts proteins S5 and S12.

Functionally, one of the primary rRNA binding proteins, it binds directly to 16S rRNA central domain where it helps coordinate assembly of the platform of the 30S subunit. The protein is Small ribosomal subunit protein uS8 of Rhizobium etli (strain CIAT 652).